A 285-amino-acid polypeptide reads, in one-letter code: Large ribosomal subunit protein uL2 (285 aa).

Residues 215–285 are disordered; sequence GRSRHKGIRP…IIRNRKGEQY (71 aa). Residues 256-272 show a composition bias toward basic residues; sequence WGKRHMGVKTRNMKKHS.

The protein belongs to the universal ribosomal protein uL2 family. Part of the 50S ribosomal subunit. Forms a bridge to the 30S subunit in the 70S ribosome.

One of the primary rRNA binding proteins. Required for association of the 30S and 50S subunits to form the 70S ribosome, for tRNA binding and peptide bond formation. It has been suggested to have peptidyltransferase activity; this is somewhat controversial. Makes several contacts with the 16S rRNA in the 70S ribosome. This chain is Large ribosomal subunit protein uL2, found in Mycoplasma genitalium (strain ATCC 33530 / DSM 19775 / NCTC 10195 / G37) (Mycoplasmoides genitalium).